The sequence spans 282 residues: Caspase-3 (282 aa).

Active-site residues include His-131 and Cys-174.

It belongs to the peptidase C14A family. As to quaternary structure, heterotetramer that consists of two anti-parallel arranged heterodimers, each one formed by a 17 kDa (p17) and a 12 kDa (p12) subunit.

It localises to the cytoplasm. It carries out the reaction Strict requirement for an Asp residue at positions P1 and P4. It has a preferred cleavage sequence of Asp-Xaa-Xaa-Asp-|- with a hydrophobic amino-acid residue at P2 and a hydrophilic amino-acid residue at P3, although Val or Ala are also accepted at this position.. Important mediator of apoptosis. At the onset of apoptosis, it proteolytically cleaves poly(ADP-ribose) polymerase PARP1 at a '216-Asp-|-Gly-217' bond. The protein is Caspase-3 (casp3) of Xenopus laevis (African clawed frog).